A 129-amino-acid polypeptide reads, in one-letter code: uncharacterized protein (129 aa).

The protein localises to the cytoplasm. It is found in the cytosol. It localises to the nucleus. This is an uncharacterized protein from Schizosaccharomyces pombe (strain 972 / ATCC 24843) (Fission yeast).